The sequence spans 435 residues: Probable exopolygalacturonase X (435 aa).

The first 22 residues, 1–22 (MRLTHVLSHTLGLLALGATAEA), serve as a signal peptide directing secretion. Residues 31–55 (CSPKKPFRPLPTSSSRDKTCHVRSH) form a disordered region. Residues 45–55 (SRDKTCHVRSH) are compositionally biased toward basic and acidic residues. Asparagine 93, asparagine 112, asparagine 128, and asparagine 198 each carry an N-linked (GlcNAc...) asparagine glycan. PbH1 repeat units follow at residues 199 to 229 (SSNVLFDGIDISGYSKSDNEAKNTDGWDTYR) and 230 to 251 (SNNIVIQNSVINNGDDCVSFKP). The active-site Proton donor is aspartate 244. The cysteines at positions 246 and 263 are disulfide-linked. N-linked (GlcNAc...) asparagine glycosylation is found at asparagine 252 and asparagine 264. The PbH1 3 repeat unit spans residues 253–273 (STNILVQNLHCNGSHGISVGS). Residue histidine 267 is part of the active site. N-linked (GlcNAc...) asparagine glycans are attached at residues asparagine 291, asparagine 296, asparagine 328, and asparagine 353. The stretch at 326–347 (VKNITYDTALIDNVDWAIEITQ) is one PbH1 4 repeat. Residues 361-409 (PSSLTISDVHIKNFRGTTSGSEDPYVGTIVCSSPDTCSDIYTSNINVTS) form a PbH1 5 repeat. A disulfide bond links cysteine 391 and cysteine 397. N-linked (GlcNAc...) asparagine glycosylation is found at asparagine 406 and asparagine 429.

It belongs to the glycosyl hydrolase 28 family.

The protein localises to the secreted. The enzyme catalyses [(1-&gt;4)-alpha-D-galacturonosyl](n) + H2O = alpha-D-galacturonate + [(1-&gt;4)-alpha-D-galacturonosyl](n-1). Functionally, specific in hydrolyzing the terminal glycosidic bond of polygalacturonic acid and oligogalacturonates. This is Probable exopolygalacturonase X (pgaX) from Aspergillus niger (strain ATCC MYA-4892 / CBS 513.88 / FGSC A1513).